Here is a 1130-residue protein sequence, read N- to C-terminus: Roquin-1 (1130 aa).

Zn(2+) contacts are provided by cysteine 14, cysteine 17, cysteine 33, histidine 35, cysteine 38, cysteine 50, and aspartate 53. Residues 14–54 (CPICTQTFDETIRKPISLGCGHTVCKMCLNKLHRKACPFDQ) form an RING-type; degenerate zinc finger. Residues 128–176 (VLSRPMQRKLVTLVHCQLVEEEGRIRAMRAARSLGERTVTELILQHQNP) form an HEPN-N region. The tract at residues 177-326 (QQLSSNLWAA…MQSIIDKLQT (150 aa)) is ROQ. Positions 327–399 (PASFAQSVQE…GLVDYIQNHS (73 aa)) are HEPN-C. The C3H1-type zinc-finger motif lies at 413 to 441 (KYKTYMCRDMKQRGGCPRGASCTFAHSQE). Serine 462 carries the phosphoserine modification. Disordered stretches follow at residues 493–567 (LPNG…DLPP) and 722–750 (PHPA…PSLD). Positions 497 to 506 (IASSGSTVTQ) are enriched in polar residues. Phosphoserine occurs at positions 531 and 535. Pro residues-rich tracts occupy residues 553-567 (NPHP…DLPP) and 732-746 (PRDP…PQPH). A phosphoserine mark is found at serine 861, serine 1107, and serine 1110. The tract at residues 1100–1130 (KTSSLNLSEDSEGGGDNNDSQRSGVVSNSAP) is disordered. The span at 1116-1130 (NNDSQRSGVVSNSAP) shows a compositional bias: polar residues.

Interacts with DDX6 and EDC4. Interacts with CCR4-NOT deadenylase complex. Interacts with RC3H1; the interaction is RNA independent. Proteolytically cleaved after Arg-510 and Arg-579 by MALT1 in activated CD4(+) T cells; cleavage at Arg-510 and Arg-579 is critical for promoting RC3H1 degradation in response to T-cell receptor (TCR) stimulation, and hence is necessary for prolonging the stability of a set of mRNAs controlling Th17 cell differentiation. Widely expressed, with highest levels in lymph node and thymus and slightly lesser amounts in brain, lung, and spleen (at protein level). Very weak expression in heart, muscle, and kidney (at protein level). Expressed in CD4(+) helper T-cells (at protein level).

The protein localises to the cytoplasm. The protein resides in the P-body. It is found in the cytoplasmic granule. The enzyme catalyses S-ubiquitinyl-[E2 ubiquitin-conjugating enzyme]-L-cysteine + [acceptor protein]-L-lysine = [E2 ubiquitin-conjugating enzyme]-L-cysteine + N(6)-ubiquitinyl-[acceptor protein]-L-lysine.. Its pathway is protein modification; protein ubiquitination. Functionally, post-transcriptional repressor of mRNAs containing a conserved stem loop motif, called constitutive decay element (CDE), which is often located in the 3'-UTR, as in HMGXB3, ICOS, IER3, NFKBID, NFKBIZ, PPP1R10, TNF, TNFRSF4 and in many more mRNAs. Cleaves translationally inactive mRNAs harboring a stem-loop (SL), often located in their 3'-UTRs, during the early phase of inflammation in a helicase UPF1-independent manner. Binds to CDE and promotes mRNA deadenylation and degradation. This process does not involve miRNAs. In follicular helper T (Tfh) cells, represses of ICOS and TNFRSF4/Ox40 expression, thus preventing spontaneous Tfh cell differentiation, germinal center B-cell differentiation in the absence of immunization and autoimmunity. In resting or LPS-stimulated macrophages, controls inflammation by suppressing TNF expression. Also recognizes CDE in its own mRNA and in that of paralogous RC3H2, possibly leading to feedback loop regulation. Inhibits cooperatively with ZC3H12A the differentiation of helper T cells Th17 in lungs. They repress target mRNA encoding the Th17 cell-promoting factors IL6, ICOS, REL, IRF4, NFKBID and NFKBIZ. The cooperation requires RNA-binding by RC3H1 and the nuclease activity of ZC3H12A. Recognizes and binds mRNAs containing a hexaloop stem-loop motif, called alternative decay element (ADE). Together with ZC3H12A, destabilizes TNFRSF4/OX40 mRNA by binding to the conserved stem loop structure in its 3'UTR. Able to interact with double-stranded RNA. miRNA-binding protein that regulates microRNA homeostasis. Enhances DICER-mediated processing of pre-MIR146a but reduces mature MIR146a levels through an increase of 3' end uridylation. Both inhibits ICOS mRNA expression and they may act together to exert the suppression. Acts as a ubiquitin E3 ligase. Pairs with E2 enzymes UBE2A, UBE2B, UBE2D2, UBE2F, UBE2G1, UBE2G2 and UBE2L3 and produces polyubiquitin chains. Shows the strongest activity when paired with UBE2N:UBE2V1 or UBE2N:UBE2V2 E2 complexes and generate both short and long polyubiquitin chains. In Mus musculus (Mouse), this protein is Roquin-1.